Here is a 1383-residue protein sequence, read N- to C-terminus: DNA-directed RNA polymerase subunit beta (1383 aa).

The protein belongs to the RNA polymerase beta chain family. The RNAP catalytic core consists of 2 alpha, 1 beta, 1 beta' and 1 omega subunit. When a sigma factor is associated with the core the holoenzyme is formed, which can initiate transcription.

It catalyses the reaction RNA(n) + a ribonucleoside 5'-triphosphate = RNA(n+1) + diphosphate. Its function is as follows. DNA-dependent RNA polymerase catalyzes the transcription of DNA into RNA using the four ribonucleoside triphosphates as substrates. This chain is DNA-directed RNA polymerase subunit beta, found in Bartonella henselae (strain ATCC 49882 / DSM 28221 / CCUG 30454 / Houston 1) (Rochalimaea henselae).